A 110-amino-acid chain; its full sequence is UPF0060 membrane protein PFL_4337 (110 aa).

4 helical membrane-spanning segments follow: residues 5–25, 31–51, 59–79, and 84–104; these read LWFFLAALFEIAGCYAFWMWL, ALWVIPALVSLTLFALLLTKV, AYAAYGGIYIVASIGWLAVVE, and LGSDWLGLALCVIGASVILFG.

Belongs to the UPF0060 family.

It localises to the cell inner membrane. This Pseudomonas fluorescens (strain ATCC BAA-477 / NRRL B-23932 / Pf-5) protein is UPF0060 membrane protein PFL_4337.